The primary structure comprises 245 residues: Ribonuclease PH (245 aa).

Phosphate is bound by residues R93 and 131 to 133 (GTR).

It belongs to the RNase PH family. Homohexameric ring arranged as a trimer of dimers.

It carries out the reaction tRNA(n+1) + phosphate = tRNA(n) + a ribonucleoside 5'-diphosphate. Phosphorolytic 3'-5' exoribonuclease that plays an important role in tRNA 3'-end maturation. Removes nucleotide residues following the 3'-CCA terminus of tRNAs; can also add nucleotides to the ends of RNA molecules by using nucleoside diphosphates as substrates, but this may not be physiologically important. Probably plays a role in initiation of 16S rRNA degradation (leading to ribosome degradation) during starvation. This chain is Ribonuclease PH, found in Corynebacterium glutamicum (strain R).